We begin with the raw amino-acid sequence, 306 residues long: 26S proteasome regulatory subunit RPN11 (306 aa).

The MPN domain occupies 27-162 (VYISSIALLK…IDAFRLIDTG (136 aa)). Residues histidine 109, histidine 111, and aspartate 122 each coordinate Zn(2+). The short motif at 109-122 (HSHPGFGCWLSSVD) is the JAMM motif element.

It belongs to the peptidase M67A family.

Functionally, acts as a regulatory subunit of the 26 proteasome which is involved in the ATP-dependent degradation of ubiquitinated proteins. The chain is 26S proteasome regulatory subunit RPN11 (RPN11) from Candida glabrata (strain ATCC 2001 / BCRC 20586 / JCM 3761 / NBRC 0622 / NRRL Y-65 / CBS 138) (Yeast).